The chain runs to 247 residues: Geranylgeranylglyceryl phosphate synthase (247 aa).

2 residues coordinate Mg(2+): aspartate 23 and serine 52. Residues 171–177 (YLEAGSG), 203–204 (GG), and 225–226 (GT) each bind sn-glycerol 1-phosphate.

The protein belongs to the GGGP/HepGP synthase family. Group II subfamily. It depends on Mg(2+) as a cofactor.

It localises to the cytoplasm. It catalyses the reaction sn-glycerol 1-phosphate + (2E,6E,10E)-geranylgeranyl diphosphate = sn-3-O-(geranylgeranyl)glycerol 1-phosphate + diphosphate. The protein operates within membrane lipid metabolism; glycerophospholipid metabolism. Prenyltransferase that catalyzes the transfer of the geranylgeranyl moiety of geranylgeranyl diphosphate (GGPP) to the C3 hydroxyl of sn-glycerol-1-phosphate (G1P). This reaction is the first ether-bond-formation step in the biosynthesis of archaeal membrane lipids. The sequence is that of Geranylgeranylglyceryl phosphate synthase from Methanosarcina acetivorans (strain ATCC 35395 / DSM 2834 / JCM 12185 / C2A).